Consider the following 242-residue polypeptide: Uroporphyrinogen-III C-methyltransferase (242 aa).

S-adenosyl-L-homocysteine-binding positions include proline 12, 88-90, 118-119, and methionine 170; these read GGD and TS.

This sequence belongs to the precorrin methyltransferase family. In terms of assembly, homodimer.

It catalyses the reaction uroporphyrinogen III + 2 S-adenosyl-L-methionine = precorrin-2 + 2 S-adenosyl-L-homocysteine + H(+). Its pathway is cofactor biosynthesis; adenosylcobalamin biosynthesis; precorrin-2 from uroporphyrinogen III: step 1/1. Catalyzes the two successive C-2 and C-7 methylation reactions involved in the conversion of uroporphyrinogen III to precorrin-2 via the intermediate formation of precorrin-1. It is a step in the biosynthesis of both cobalamin (vitamin B12) and coenzyme F430. This chain is Uroporphyrinogen-III C-methyltransferase (cobA), found in Methanocaldococcus jannaschii (strain ATCC 43067 / DSM 2661 / JAL-1 / JCM 10045 / NBRC 100440) (Methanococcus jannaschii).